A 441-amino-acid polypeptide reads, in one-letter code: tRNA-2-methylthio-N(6)-dimethylallyladenosine synthase (441 aa).

The region spanning 5 to 121 (KKLFIKTYGC…LPQMEARLRE (117 aa)) is the MTTase N-terminal domain. 6 residues coordinate [4Fe-4S] cluster: Cys-14, Cys-50, Cys-84, Cys-159, Cys-163, and Cys-166. The 236-residue stretch at 145 to 380 (ARRAPSAFLT…TRQQQDIQQS (236 aa)) folds into the Radical SAM core domain. The 63-residue stretch at 379–441 (QSMVGRDVSV…RNSLAAVTLA (63 aa)) folds into the TRAM domain.

Belongs to the methylthiotransferase family. MiaB subfamily. As to quaternary structure, monomer. The cofactor is [4Fe-4S] cluster.

It localises to the cytoplasm. The catalysed reaction is N(6)-dimethylallyladenosine(37) in tRNA + (sulfur carrier)-SH + AH2 + 2 S-adenosyl-L-methionine = 2-methylsulfanyl-N(6)-dimethylallyladenosine(37) in tRNA + (sulfur carrier)-H + 5'-deoxyadenosine + L-methionine + A + S-adenosyl-L-homocysteine + 2 H(+). Catalyzes the methylthiolation of N6-(dimethylallyl)adenosine (i(6)A), leading to the formation of 2-methylthio-N6-(dimethylallyl)adenosine (ms(2)i(6)A) at position 37 in tRNAs that read codons beginning with uridine. The chain is tRNA-2-methylthio-N(6)-dimethylallyladenosine synthase from Roseobacter denitrificans (strain ATCC 33942 / OCh 114) (Erythrobacter sp. (strain OCh 114)).